The sequence spans 298 residues: Transcription factor RHD6 (298 aa).

Disordered regions lie at residues methionine 1 to glutamine 58 and threonine 157 to arginine 213. Residues serine 15–serine 27 show a composition bias toward low complexity. 2 stretches are compositionally biased toward polar residues: residues threonine 157 to serine 168 and glycine 177 to valine 190. A compositionally biased stretch (low complexity) spans threonine 191 to proline 205. The tract at residues serine 201–arginine 214 is basic motif. One can recognise a bHLH domain in the interval serine 201–leucine 250. The tract at residues glutamate 215 to leucine 250 is helix-loop-helix motif.

In terms of assembly, homodimer. Forms heterodimers with RSL1. Interacts with TIFY10B/JAZ2, TIFY6A/JAZ4, TIFY5A/JAZ8, TIFY7/JAZ9 and TIFY9/JAZ10. In terms of tissue distribution, expressed constitutively in flowers. Expressed in root epidermal hair cells.

It localises to the nucleus. Its function is as follows. Transcription factor that is specifically required for the development of root hairs. Acts with RSL1 to positively regulate root hair development. Acts downstream of genes that regulate epidermal pattern formation, such as GL2. Targets directly RSL4, another transcription factor involved in the regulation of root hair elongation. Acts with RSL1 as transcription factor that integrates a jasmonate (JA) signaling pathway that stimulates root hair growth. This is Transcription factor RHD6 from Arabidopsis thaliana (Mouse-ear cress).